The sequence spans 723 residues: Peroxisomal bifunctional enzyme (723 aa).

The segment at 1-282 (MAEYTRLHNA…LAERKANKWS (282 aa)) is enoyl-CoA hydratase / isomerase. Position 38 is an N6-succinyllysine (Lys38). Gly101 lines the substrate pocket. At Lys165 the chain carries N6-acetyllysine; alternate. N6-succinyllysine; alternate is present on Lys165. Lys171 is modified (N6-acetyllysine). Lys219 carries the post-translational modification N6-acetyllysine; alternate. Lys219 bears the N6-succinyllysine; alternate mark. Residue Lys250 is modified to N6-acetyllysine. N6-succinyllysine is present on residues Lys280 and Lys290. The interval 283-572 (TPSGASWKTA…DVLCELGRFG (290 aa)) is 3-hydroxyacyl-CoA dehydrogenase. An N6-acetyllysine mark is found at Lys346, Lys350, and Lys464. Lys532 carries the post-translational modification N6-succinyllysine. At Thr548 the chain carries Phosphothreonine. Lys577 is subject to N6-succinyllysine. Residues Lys584, Lys591, and Lys710 each carry the N6-acetyllysine; alternate modification. N6-succinyllysine; alternate occurs at positions 584, 591, and 710. Residues 699–723 (KKLASQGNPPQKEWQSLAGSPSSKL) form a disordered region. Over residues 703–723 (SQGNPPQKEWQSLAGSPSSKL) the composition is skewed to polar residues. Residue Ser718 is modified to Phosphoserine. The Microbody targeting signal signature appears at 721 to 723 (SKL). Lys722 is subject to N6-succinyllysine.

In the N-terminal section; belongs to the enoyl-CoA hydratase/isomerase family. It in the C-terminal section; belongs to the 3-hydroxyacyl-CoA dehydrogenase family. In terms of assembly, monomer. Post-translationally, acetylated, leading to enhanced enzyme activity. Acetylation is enhanced by up to 80% after treatment either with trichostin A (TSA) or with nicotinamide (NAM) with highest increase on Lys-346. Acetylation and enzyme activity increased by about 1.5% on addition of fatty acids.

Its subcellular location is the peroxisome. The catalysed reaction is a (3S)-3-hydroxyacyl-CoA = a (2E)-enoyl-CoA + H2O. It carries out the reaction a 4-saturated-(3S)-3-hydroxyacyl-CoA = a (3E)-enoyl-CoA + H2O. It catalyses the reaction a (3Z)-enoyl-CoA = a 4-saturated (2E)-enoyl-CoA. The enzyme catalyses a (3E)-enoyl-CoA = a 4-saturated (2E)-enoyl-CoA. The catalysed reaction is a (3S)-3-hydroxyacyl-CoA + NAD(+) = a 3-oxoacyl-CoA + NADH + H(+). It carries out the reaction (2S,3S)-3-hydroxy-2-methylbutanoyl-CoA = (2E)-2-methylbut-2-enoyl-CoA + H2O. It catalyses the reaction (3S)-hydroxyhexadecanoyl-CoA + NAD(+) = 3-oxohexadecanoyl-CoA + NADH + H(+). The enzyme catalyses (3S)-hydroxyhexadecanoyl-CoA = (2E)-hexadecenoyl-CoA + H2O. The catalysed reaction is (2E)-hexadecenedioyl-CoA + H2O = (3S)-hydroxyhexadecanedioyl-CoA. It carries out the reaction (3S)-hydroxyhexadecanedioyl-CoA + NAD(+) = 3-oxohexadecanedioyl-CoA + NADH + H(+). It catalyses the reaction (3E,5Z)-tetradecadienoyl-CoA = (2E,5Z)-tetradecadienoyl-CoA. The enzyme catalyses (3E,5Z)-octadienoyl-CoA = (2E,5Z)-octadienoyl-CoA. The catalysed reaction is (3S)-hydroxydecanoyl-CoA + NAD(+) = 3-oxodecanoyl-CoA + NADH + H(+). It carries out the reaction (3E)-decenoyl-CoA = (2E)-decenoyl-CoA. It catalyses the reaction (3Z)-hexenoyl-CoA = (2E)-hexenoyl-CoA. The enzyme catalyses (3E)-hexenoyl-CoA = (2E)-hexenoyl-CoA. The catalysed reaction is (3S)-hydroxydecanoyl-CoA = (2E)-decenoyl-CoA + H2O. It carries out the reaction (3S)-hydroxyhexanoyl-CoA = (2E)-hexenoyl-CoA + H2O. It participates in lipid metabolism; fatty acid beta-oxidation. Enzyme activity enhanced by acetylation. Its function is as follows. Peroxisomal trifunctional enzyme possessing 2-enoyl-CoA hydratase, 3-hydroxyacyl-CoA dehydrogenase, and delta 3, delta 2-enoyl-CoA isomerase activities. Catalyzes two of the four reactions of the long chain fatty acids peroxisomal beta-oxidation pathway. Can also use branched-chain fatty acids such as 2-methyl-2E-butenoyl-CoA as a substrate, which is hydrated into (2S,3S)-3-hydroxy-2-methylbutanoyl-CoA. Optimal isomerase for 2,5 double bonds into 3,5 form isomerization in a range of enoyl-CoA species. Also able to isomerize both 3-cis and 3-trans double bonds into the 2-trans form in a range of enoyl-CoA species. Regulates the amount of medium-chain dicarboxylic fatty acids which are essential regulators of all fatty acid oxidation pathways. Also involved in the degradation of long-chain dicarboxylic acids through peroxisomal beta-oxidation. This is Peroxisomal bifunctional enzyme (EHHADH) from Pongo abelii (Sumatran orangutan).